We begin with the raw amino-acid sequence, 227 residues long: MAYPMQLGFQDATSPIMEELLHFHDHTLMIVFLISSLVLYIISLMLTTKLTHTSTMDAQEVETVWTILPAIILIMIALPSLRILYMMDEINNPSLTVKTMGHQWYWSYEYTDYEDLSFDSYMIPTSELKPGELRLLEVDNRVVLPMEMTIRMLISSEDVLHSWAVPSLGLKTDAIPGRLNQTTLMSTRPGLFYGQCSEICGSNHSFMPIVLELVPLKYFEKWSASML.

The Mitochondrial intermembrane segment spans residues 1–14 (MAYPMQLGFQDATS). Residues 15–45 (PIMEELLHFHDHTLMIVFLISSLVLYIISLM) form a helical membrane-spanning segment. Residues 46 to 59 (LTTKLTHTSTMDAQ) lie on the Mitochondrial matrix side of the membrane. Residues 60–87 (EVETVWTILPAIILIMIALPSLRILYMM) form a helical membrane-spanning segment. The Mitochondrial intermembrane segment spans residues 88-227 (DEINNPSLTV…YFEKWSASML (140 aa)). 6 residues coordinate Cu cation: His161, Cys196, Glu198, Cys200, His204, and Met207. Residue Glu198 participates in Mg(2+) binding. Phosphotyrosine is present on Tyr218.

It belongs to the cytochrome c oxidase subunit 2 family. In terms of assembly, component of the cytochrome c oxidase (complex IV, CIV), a multisubunit enzyme composed of 14 subunits. The complex is composed of a catalytic core of 3 subunits MT-CO1, MT-CO2 and MT-CO3, encoded in the mitochondrial DNA, and 11 supernumerary subunits COX4I, COX5A, COX5B, COX6A, COX6B, COX6C, COX7A, COX7B, COX7C, COX8 and NDUFA4, which are encoded in the nuclear genome. The complex exists as a monomer or a dimer and forms supercomplexes (SCs) in the inner mitochondrial membrane with NADH-ubiquinone oxidoreductase (complex I, CI) and ubiquinol-cytochrome c oxidoreductase (cytochrome b-c1 complex, complex III, CIII), resulting in different assemblies (supercomplex SCI(1)III(2)IV(1) and megacomplex MCI(2)III(2)IV(2)). Found in a complex with TMEM177, COA6, COX18, COX20, SCO1 and SCO2. Interacts with TMEM177 in a COX20-dependent manner. Interacts with COX20. Interacts with COX16. It depends on Cu cation as a cofactor.

Its subcellular location is the mitochondrion inner membrane. The enzyme catalyses 4 Fe(II)-[cytochrome c] + O2 + 8 H(+)(in) = 4 Fe(III)-[cytochrome c] + 2 H2O + 4 H(+)(out). In terms of biological role, component of the cytochrome c oxidase, the last enzyme in the mitochondrial electron transport chain which drives oxidative phosphorylation. The respiratory chain contains 3 multisubunit complexes succinate dehydrogenase (complex II, CII), ubiquinol-cytochrome c oxidoreductase (cytochrome b-c1 complex, complex III, CIII) and cytochrome c oxidase (complex IV, CIV), that cooperate to transfer electrons derived from NADH and succinate to molecular oxygen, creating an electrochemical gradient over the inner membrane that drives transmembrane transport and the ATP synthase. Cytochrome c oxidase is the component of the respiratory chain that catalyzes the reduction of oxygen to water. Electrons originating from reduced cytochrome c in the intermembrane space (IMS) are transferred via the dinuclear copper A center (CU(A)) of subunit 2 and heme A of subunit 1 to the active site in subunit 1, a binuclear center (BNC) formed by heme A3 and copper B (CU(B)). The BNC reduces molecular oxygen to 2 water molecules using 4 electrons from cytochrome c in the IMS and 4 protons from the mitochondrial matrix. This is Cytochrome c oxidase subunit 2 (MT-CO2) from Capra hircus (Goat).